We begin with the raw amino-acid sequence, 185 residues long: Ribosome-recycling factor (185 aa).

Belongs to the RRF family.

The protein localises to the cytoplasm. Functionally, responsible for the release of ribosomes from messenger RNA at the termination of protein biosynthesis. May increase the efficiency of translation by recycling ribosomes from one round of translation to another. This chain is Ribosome-recycling factor, found in Methylococcus capsulatus (strain ATCC 33009 / NCIMB 11132 / Bath).